A 731-amino-acid chain; its full sequence is Putative beta-galactosidase (731 aa).

Positions 1 to 29 are cleaved as a signal peptide; sequence MLCGKENNVMKMMLVYVFVLITLISCVYG. E187 acts as the Proton donor in catalysis. E257 functions as the Nucleophile in the catalytic mechanism.

It belongs to the glycosyl hydrolase 35 family. As to expression, senescing flower petals.

It catalyses the reaction Hydrolysis of terminal non-reducing beta-D-galactose residues in beta-D-galactosides.. The chain is Putative beta-galactosidase (CARSR12) from Dianthus caryophyllus (Carnation).